The sequence spans 250 residues: 3-deoxy-manno-octulosonate cytidylyltransferase (250 aa).

This sequence belongs to the KdsB family.

It is found in the cytoplasm. It catalyses the reaction 3-deoxy-alpha-D-manno-oct-2-ulosonate + CTP = CMP-3-deoxy-beta-D-manno-octulosonate + diphosphate. Its pathway is nucleotide-sugar biosynthesis; CMP-3-deoxy-D-manno-octulosonate biosynthesis; CMP-3-deoxy-D-manno-octulosonate from 3-deoxy-D-manno-octulosonate and CTP: step 1/1. The protein operates within bacterial outer membrane biogenesis; lipopolysaccharide biosynthesis. In terms of biological role, activates KDO (a required 8-carbon sugar) for incorporation into bacterial lipopolysaccharide in Gram-negative bacteria. This chain is 3-deoxy-manno-octulosonate cytidylyltransferase, found in Francisella tularensis subsp. novicida (strain U112).